A 1083-amino-acid chain; its full sequence is DNA primase (1083 aa).

The segment at 1022-1061 (CLRYPHRGGRTAPRTFVSLRVDHHNRLCISLAQQCFATKC) adopts a CHC2-type zinc-finger fold.

Belongs to the herpesviridae DNA primase family. As to quaternary structure, associates with the helicase and the primase-associated factor to form the helicase-primase factor.

The protein resides in the host nucleus. Essential component of the helicase/primase complex. Unwinds the DNA at the replication forks and generates single-stranded DNA for both leading and lagging strand synthesis. The primase initiates primer synthesis and thereby produces large amount of short RNA primers on the lagging strand that the polymerase elongates using dNTPs. This Homo sapiens (Human) protein is DNA primase.